The chain runs to 284 residues: UPF0294 protein VV1_1880 (284 aa).

This sequence belongs to the UPF0294 family.

The protein resides in the cytoplasm. The polypeptide is UPF0294 protein VV1_1880 (Vibrio vulnificus (strain CMCP6)).